The primary structure comprises 299 residues: tRNA dimethylallyltransferase (299 aa).

13–20 (GPTASGKT) lines the ATP pocket. 15-20 (TASGKT) provides a ligand contact to substrate. The tract at residues 38 to 41 (DSRQ) is interaction with substrate tRNA.

It belongs to the IPP transferase family. As to quaternary structure, monomer. The cofactor is Mg(2+).

It carries out the reaction adenosine(37) in tRNA + dimethylallyl diphosphate = N(6)-dimethylallyladenosine(37) in tRNA + diphosphate. In terms of biological role, catalyzes the transfer of a dimethylallyl group onto the adenine at position 37 in tRNAs that read codons beginning with uridine, leading to the formation of N6-(dimethylallyl)adenosine (i(6)A). The protein is tRNA dimethylallyltransferase of Prochlorococcus marinus subsp. pastoris (strain CCMP1986 / NIES-2087 / MED4).